A 381-amino-acid polypeptide reads, in one-letter code: Pulmonary surfactant-associated protein B (381 aa).

An N-terminal signal peptide occupies residues 1–24 (MAESHLLQWLLLLLPTLCGPGTAA). Residues 25–65 (WTTSSLACAQGPEFWCQSLEQALQCRALGHCLQEVWGHVGA) enclose the Saposin A-type domain. The propeptide occupies 25 to 200 (WTTSSLACAQ…PHTQDLSEQQ (176 aa)). Saposin B-type domains are found at residues 65–147 (ADDL…KSRQ), 204–281 (PLPY…SMDD), and 295–370 (RDSE…GTMS). 9 disulfides stabilise this stretch: Cys69–Cys143, Cys72–Cys137, Cys100–Cys112, Cys208–Cys277, Cys211–Cys271, Cys235–Cys246, Cys299–Cys366, Cys302–Cys360, and Cys325–Cys335. N-linked (GlcNAc...) asparagine glycosylation is present at Asn129. Residues 280-381 (DDSAGPRSPT…PLQCIHSPDL (102 aa)) constitute a propeptide that is removed on maturation. Asn311 is a glycosylation site (N-linked (GlcNAc...) asparagine).

Homodimer; disulfide-linked.

Its subcellular location is the secreted. The protein resides in the extracellular space. The protein localises to the surface film. In terms of biological role, pulmonary surfactant-associated proteins promote alveolar stability by lowering the surface tension at the air-liquid interface in the peripheral air spaces. SP-B increases the collapse pressure of palmitic acid to nearly 70 millinewtons per meter. This is Pulmonary surfactant-associated protein B (SFTPB) from Homo sapiens (Human).